Consider the following 156-residue polypeptide: MPRKGHVTKRDVLADPVYNSKLVTKLINHLMIDGKRAKASSILYDAFNIVQDKTGKEPLDVFEEAMNNVMPVLEVRARRIGGSNYQIPVEVRPERRTTLGLRWLVSYARLRNEHTMDERLANEIIDASNNTGSAVKKREDVHRMAEANRAFAHYRF.

Belongs to the universal ribosomal protein uS7 family. Part of the 30S ribosomal subunit. Contacts proteins S9 and S11.

In terms of biological role, one of the primary rRNA binding proteins, it binds directly to 16S rRNA where it nucleates assembly of the head domain of the 30S subunit. Is located at the subunit interface close to the decoding center, probably blocks exit of the E-site tRNA. In Lactobacillus acidophilus (strain ATCC 700396 / NCK56 / N2 / NCFM), this protein is Small ribosomal subunit protein uS7.